We begin with the raw amino-acid sequence, 276 residues long: Transcriptional antiactivator ExsD (276 aa).

As to quaternary structure, can form homotrimer. Interacts with ExsA; this interaction inhibits ExsA activity. Interacts with ExsC; this interaction dissociates the ExsD-ExsA complex.

Its function is as follows. Negative regulator of the type III secretion system regulon. Acts by disrupting transcriptional activator ExsA self-association and DNA-binding activity in absence of inducing signals. Upon host cell contact, this interaction is disrupted by the anti-antiactivator protein ExsC leading to ExsA activation. This is Transcriptional antiactivator ExsD (exsD) from Pseudomonas aeruginosa (strain ATCC 15692 / DSM 22644 / CIP 104116 / JCM 14847 / LMG 12228 / 1C / PRS 101 / PAO1).